We begin with the raw amino-acid sequence, 448 residues long: Tryptophan dimethylallyltransferase 2 (448 aa).

L-tryptophan-binding positions include 80 to 81 (IL) and Glu-89. Substrate is bound by residues Arg-100, Lys-186, and Tyr-188. L-tryptophan is bound by residues Tyr-190 and Arg-249. Substrate is bound by residues Arg-262, Lys-264, Tyr-266, Gln-348, Tyr-350, Tyr-414, and Tyr-418.

This sequence belongs to the tryptophan dimethylallyltransferase family. Homodimer.

The enzyme catalyses L-tryptophan + dimethylallyl diphosphate = 4-(3-methylbut-2-enyl)-L-tryptophan + diphosphate. It participates in alkaloid biosynthesis; ergot alkaloid biosynthesis. In terms of biological role, catalyzes the first step of ergot alkaloid biosynthesis. Ergot alkaloids, which are produced by endophyte fungi, can enhance plant host fitness, but also cause livestock toxicosis to host plants. This chain is Tryptophan dimethylallyltransferase 2 (dmaW2), found in Claviceps purpurea (strain 20.1) (Ergot fungus).